Consider the following 356-residue polypeptide: MKPSLLDFRLKELQANIKPSFRAKQIYGWLYHNYAQSFDDMKNIPQQLKDELAKSYVVNLLKIVKKELSNDGTIKYLFELQDGKTIETVWLKMKDEQIDEEGCVTQEAKYTICVSTQVGCKVGCAFCLTAKGGFTRDLTAGEIVAQVVALKKDNDHKHNRMINIVYMGMGEPLDNLDNLSRAIEIFKEEDGLCISGKRQTVSTSGLSNKIDRLGEMDLGVHIAISLHAVDDELRTELIPMNKAHNISSIIEAVKRFPIDTRKRVMFEYLVIKNKNDDLGSAKKLVKLLSGIKAKVNLIYFNPYPDTPYERPQKSDMIAFQEYLINHGLLCTIRDSKGIDISAACGQLKEKTQSELQ.

Residue E87 is the Proton acceptor of the active site. A Radical SAM core domain is found at 106-339; sequence QEAKYTICVS…CTIRDSKGID (234 aa). C113 and C344 are disulfide-bonded. C120, C124, and C127 together coordinate [4Fe-4S] cluster. S-adenosyl-L-methionine contacts are provided by residues 170–171, S202, 225–227, and N301; these read GE and SLH. The active-site S-methylcysteine intermediate is the C344.

This sequence belongs to the radical SAM superfamily. RlmN family. [4Fe-4S] cluster serves as cofactor.

The protein resides in the cytoplasm. It catalyses the reaction adenosine(2503) in 23S rRNA + 2 reduced [2Fe-2S]-[ferredoxin] + 2 S-adenosyl-L-methionine = 2-methyladenosine(2503) in 23S rRNA + 5'-deoxyadenosine + L-methionine + 2 oxidized [2Fe-2S]-[ferredoxin] + S-adenosyl-L-homocysteine. The enzyme catalyses adenosine(37) in tRNA + 2 reduced [2Fe-2S]-[ferredoxin] + 2 S-adenosyl-L-methionine = 2-methyladenosine(37) in tRNA + 5'-deoxyadenosine + L-methionine + 2 oxidized [2Fe-2S]-[ferredoxin] + S-adenosyl-L-homocysteine. Specifically methylates position 2 of adenine 2503 in 23S rRNA and position 2 of adenine 37 in tRNAs. m2A2503 modification seems to play a crucial role in the proofreading step occurring at the peptidyl transferase center and thus would serve to optimize ribosomal fidelity. The polypeptide is Dual-specificity RNA methyltransferase RlmN (Sulfurimonas denitrificans (strain ATCC 33889 / DSM 1251) (Thiomicrospira denitrificans (strain ATCC 33889 / DSM 1251))).